Consider the following 1211-residue polypeptide: MKRIRSLWFNAEASYSNLNNSPSLRNKNSTGNNSRSKNYRSFSRFDLINSILLLMMLFLLAIFVTALYLTKSSRLTYSHASRAALFNPLGVISPSLGNHTLNYDPEARESSKKLYELLSDFNTAYYDDENMILGSNLFSKNTYSRQPYVANGYIGSRIPNIGFGYALDTLNFYTDAPGALNNGWPLRNHRFAGAFVSDFYCLQPKLNSTNFPELDDVGYSTVISSIPQWTNLQFSLVNDSKWFNPQNVTLDDVTNYSQNLSMKDGIVTTELDWLNSQIHVKSEIWAHRHIHPLGVVSLEISLNTDHLPSDFDSLDVNIWDILDFNTSHRTVLHSTGTDEKNNAVFMIVQPDNVPSSNCAIYSTCTVKYENSTNPINSSESFEEKDVSSNIYNVILTEDQPKIIVHKYVGIMSTEFNKNKEQQDNTNIGLAKMIALNSKGNYEKLLSSHKRAWYDLYNDAFIEIPSDSLLEMTARSSLFHLLANTRDYNVSSDRGLPVGVSGLSSDSYGGMVFWDADIWMEPALLPFFPNVAQNMNNYRNATHSQAKLNAEKYGYPGAIYPWTSGKYANCTSTGPCVDYEYHINVDVAMASFSIYLNGHEGIDDEYLRYTTWPIIKNAAQFFTAYVKYNSSLGLYETYNLTDPDEFANHINNGAFTNAGIKTLLKWATDIGNHLGEVVDPKWSEISKDIYIPRSSSNITLEYSGMNSSVEIKQADVTLMVYPLGYINDESILNNAIKDLYYYSERQSASGPAMTYPVFVAAAAGLLNHGSSSQSYLYKSVLPYLRAPFAQFSEQSDDNFLTNGLTQPAFPFLTANGGFLQSILFGLTGIRYSYEVDPDTKKINRLLRFNPIELPLLPGGIAIRNFKYMNQVLDIIIDDHNGTIVHKSGDVPIHIKIPNRSLIHDQDINFYNGSENERKPNLERRDVDRVGDPMRMDRYGTYYLLKPKQELTVQLFKPGLNARNNIAENKQITNLTAGVPGDVAFSALDGNNYTHWQPLDKIHRAKLLIDLGEYNEKEITKGMILWGQRPAKNISISILPHSEKVENLFANVTEIMQNSGNDQLLNETIGQLLDNAGIPVENVIDFDGIEQEDDESLDDVQALLHWKKEDLAKLIEQIPRLNFLKRKFVKILDNVPVSPSEPYYEASRNQSLIEILPSNRTTFTIDYDKLQVGDKGNTDWRKTRYIVVAVQGVYDDYDDDNKGATIKEIVLND.

At 1–46 (MKRIRSLWFNAEASYSNLNNSPSLRNKNSTGNNSRSKNYRSFSRFD) the chain is on the cytoplasmic side. Residues 47 to 67 (LINSILLLMMLFLLAIFVTAL) traverse the membrane as a helical segment. Topologically, residues 68 to 1211 (YLTKSSRLTY…ATIKEIVLND (1144 aa)) are periplasmic. The tract at residues 70–131 (TKSSRLTYSH…NTAYYDDENM (62 aa)) is required for cell surface targeting. N98, N207, N238, N247, N255, N259, N325, N370, N376, and N488 each carry an N-linked (GlcNAc...) asparagine glycan. Position 513-514 (513-514 (WD)) interacts with substrate. 4 N-linked (GlcNAc...) asparagine glycosylation sites follow: N539, N568, N628, and N638. The active-site Proton donor is the E644. N696 and N705 each carry an N-linked (GlcNAc...) asparagine glycan. A substrate-binding site is contributed by 711 to 712 (KQ). N-linked (GlcNAc...) asparagine glycosylation is found at N879, N897, N910, N972, N990, N1031, N1049, N1064, N1147, and N1157.

Belongs to the glycosyl hydrolase 65 family. Post-translationally, glycosylated.

It localises to the membrane. The protein resides in the vacuole lumen. Its subcellular location is the periplasm. It catalyses the reaction alpha,alpha-trehalose + H2O = alpha-D-glucose + beta-D-glucose. Periplasmic acid trehalase that catalyzes hydrolysis of the disaccharide trehalose and required for growth on trehalose as carbon source. Growth on trehalose is strictly respiratory. This chain is Periplasmic acid trehalase ATC1, found in Saccharomyces cerevisiae (strain CEN.PK113-7D) (Baker's yeast).